The primary structure comprises 62 residues: Large ribosomal subunit protein bL28 (62 aa).

The protein belongs to the bacterial ribosomal protein bL28 family.

The chain is Large ribosomal subunit protein bL28 from Staphylococcus haemolyticus (strain JCSC1435).